Reading from the N-terminus, the 244-residue chain is 5-oxoprolinase subunit A (244 aa).

It belongs to the LamB/PxpA family. As to quaternary structure, forms a complex composed of PxpA, PxpB and PxpC.

The catalysed reaction is 5-oxo-L-proline + ATP + 2 H2O = L-glutamate + ADP + phosphate + H(+). Catalyzes the cleavage of 5-oxoproline to form L-glutamate coupled to the hydrolysis of ATP to ADP and inorganic phosphate. This is 5-oxoprolinase subunit A from Salmonella agona (strain SL483).